A 369-amino-acid polypeptide reads, in one-letter code: Phosphoribosyl pyrophosphate synthase-associated protein 2 (369 aa).

The residue at position 1 (M1) is an N-acetylmethionine. Phosphothreonine is present on T5. Residues S219, S227, and S233 each carry the phosphoserine modification.

Belongs to the ribose-phosphate pyrophosphokinase family. As to quaternary structure, binds to PRPS1 and PRPS2. Ubiquitous.

Its function is as follows. Seems to play a negative regulatory role in 5-phosphoribose 1-diphosphate synthesis. This is Phosphoribosyl pyrophosphate synthase-associated protein 2 (PRPSAP2) from Homo sapiens (Human).